Reading from the N-terminus, the 241-residue chain is MALLPFTLPLAELEVGHHLYWQIGNLNLHGQIFLSSWILIGALLAFVLVGTKNLSRDPKGAQNLLEFLWDYIRDLSRDQIGEKYYREWLPFIGTLFLFIFVSNWGGALIPWKVIELPEGELGAPTADINTTVAMALLVTLAYFYAGLSKKGWRFFELYVEPTPIMLPFKIIEEFTKPLSLSFRLFGNILADELAVGVLVYLVPLIVPLPVMLLGLFTSAIQALIFATLAAFYIGEGLHEAH.

A run of 5 helical transmembrane segments spans residues Gly-30–Gly-50, Leu-89–Ile-109, Ile-128–Ser-148, Leu-193–Leu-213, and Gly-214–Gly-234.

It belongs to the ATPase A chain family. F-type ATPases have 2 components, CF(1) - the catalytic core - and CF(0) - the membrane proton channel. CF(1) has five subunits: alpha(3), beta(3), gamma(1), delta(1), epsilon(1). CF(0) has four main subunits: a, b, b' and c.

It is found in the cellular thylakoid membrane. Functionally, key component of the proton channel; it plays a direct role in the translocation of protons across the membrane. The polypeptide is ATP synthase subunit a (Synechococcus sp. (strain CC9311)).